The sequence spans 852 residues: Serine/threonine-protein kinase pakB (852 aa).

Positions 1 to 334 are disordered; sequence MEQSKRVSMM…NVGNKQDEEK (334 aa). Ser-8 is modified (phosphoserine; by autocatalysis). Over residues 24 to 35 the composition is skewed to pro residues; that stretch reads SPPPNRKPPPPN. The segment covering 44-56 has biased composition (low complexity); that stretch reads SSLNSSGSSFVSP. The span at 57–74 shows a compositional bias: pro residues; sequence SPSPSPSPQQPVKRPLPS. Low complexity-rich tracts occupy residues 90–117 and 124–163; these read RPQQQQPEIPVRPTTPTRTPPNLINSNG and FSSSSGNSGYSSSNNNNSNSNSSINMNGNHSNGLNGGSSN. The span at 181-191 shows a compositional bias: pro residues; it reads TPPPPPQPTPS. Positions 201–210 are enriched in polar residues; it reads ASHNNTQHNI. Composition is skewed to low complexity over residues 246–270 and 293–317; these read SPGSTSPSLGSSNGNIPISTTSTPI and SNSNSNNNNNNNNNNNNNSSNATTS. Residues 356–369 enclose the CRIB domain; sequence VGSPFNVKHNIHVN. Residues 419–433 are compositionally biased toward low complexity; sequence AQQEQQALMQKQMQQ. The tract at residues 419–526 is disordered; sequence AQQEQQALMQ…GILSQQQEQQ (108 aa). Positions 470–485 are enriched in basic residues; sequence PQHHHQQQPPQQHHHQ. The segment covering 486 to 514 has biased composition (low complexity); sequence QQQQQHNNNNNNNNNNNNNNNNQQSAQQQ. Positions 570–823 constitute a Protein kinase domain; sequence GEGSTKIGEG…AKVLLNHPFL (254 aa). Residues 576–584 and Lys-599 each bind ATP; that span reads IGEGAAGEV. Asp-691 functions as the Proton acceptor in the catalytic mechanism.

Belongs to the protein kinase superfamily. STE Ser/Thr protein kinase family. STE20 subfamily. Interacts with rac1A, rac1B, rac1C, racA, racB, racC and racF1. Mg(2+) is required as a cofactor. In terms of processing, autophosphorylated at Ser-8. This may stimulate interaction with GTP-bound Rac family members which then further stimulates autophosphorylation and kinase activity.

It localises to the membrane. The protein localises to the cytoplasm. It is found in the cytoskeleton. The catalysed reaction is L-seryl-[protein] + ATP = O-phospho-L-seryl-[protein] + ADP + H(+). It catalyses the reaction L-threonyl-[protein] + ATP = O-phospho-L-threonyl-[protein] + ADP + H(+). In terms of biological role, regulator of the myosin I component of the cytoskeleton: required for regulation of cytokinesis, phagocytosis and pinocytosis. The protein is Serine/threonine-protein kinase pakB of Dictyostelium discoideum (Social amoeba).